The sequence spans 858 residues: Bifunctional uridylyltransferase/uridylyl-removing enzyme (858 aa).

The segment at 1 to 324 (MSAHAAPSPE…PATSGITRVL (324 aa)) is uridylyltransferase. The tract at residues 325–681 (SPDRFVEKQG…ARPSPIGDAL (357 aa)) is uridylyl-removing. The 123-residue stretch at 443 to 565 (VDQHILMVLR…VGNERYLTAL (123 aa)) folds into the HD domain. ACT domains lie at 682–761 (QVLV…PEPS) and 790–858 (ILSV…AIAV).

This sequence belongs to the GlnD family. The cofactor is Mg(2+).

It catalyses the reaction [protein-PII]-L-tyrosine + UTP = [protein-PII]-uridylyl-L-tyrosine + diphosphate. The catalysed reaction is [protein-PII]-uridylyl-L-tyrosine + H2O = [protein-PII]-L-tyrosine + UMP + H(+). With respect to regulation, uridylyltransferase (UTase) activity is inhibited by glutamine, while glutamine activates uridylyl-removing (UR) activity. Functionally, modifies, by uridylylation and deuridylylation, the PII regulatory proteins (GlnB and homologs), in response to the nitrogen status of the cell that GlnD senses through the glutamine level. Under low glutamine levels, catalyzes the conversion of the PII proteins and UTP to PII-UMP and PPi, while under higher glutamine levels, GlnD hydrolyzes PII-UMP to PII and UMP (deuridylylation). Thus, controls uridylylation state and activity of the PII proteins, and plays an important role in the regulation of nitrogen fixation and metabolism. This is Bifunctional uridylyltransferase/uridylyl-removing enzyme from Burkholderia lata (strain ATCC 17760 / DSM 23089 / LMG 22485 / NCIMB 9086 / R18194 / 383).